A 263-amino-acid polypeptide reads, in one-letter code: 3-methyl-2-oxobutanoate hydroxymethyltransferase (263 aa).

Residues Asp46 and Asp85 each contribute to the Mg(2+) site. Residues Asp46–Ser47, Asp85, and Lys115 contribute to the 3-methyl-2-oxobutanoate site. Glu117 provides a ligand contact to Mg(2+). Catalysis depends on Glu180, which acts as the Proton acceptor.

It belongs to the PanB family. Homodecamer; pentamer of dimers. The cofactor is Mg(2+).

Its subcellular location is the cytoplasm. It carries out the reaction 3-methyl-2-oxobutanoate + (6R)-5,10-methylene-5,6,7,8-tetrahydrofolate + H2O = 2-dehydropantoate + (6S)-5,6,7,8-tetrahydrofolate. The protein operates within cofactor biosynthesis; (R)-pantothenate biosynthesis; (R)-pantoate from 3-methyl-2-oxobutanoate: step 1/2. Its function is as follows. Catalyzes the reversible reaction in which hydroxymethyl group from 5,10-methylenetetrahydrofolate is transferred onto alpha-ketoisovalerate to form ketopantoate. The sequence is that of 3-methyl-2-oxobutanoate hydroxymethyltransferase from Corynebacterium diphtheriae (strain ATCC 700971 / NCTC 13129 / Biotype gravis).